Here is a 195-residue protein sequence, read N- to C-terminus: BH3-interacting domain death agonist (195 aa).

Met-1 is modified (N-acetylmethionine). A compositionally biased stretch (polar residues) spans 58–69 (TDGSQASRSFNQ). Residues 58–77 (TDGSQASRSFNQGRIEPDSE) form a disordered region. Ser-78 carries the phosphoserine modification. Residues 87 to 100 (ARHLAQIGDEMDHN) carry the BH3 motif.

Forms heterodimers either with the pro-apoptotic protein BAX or the anti-apoptotic protein BCL2. Interacts with PLEKHN1. In terms of assembly, interacts with ITCH. Interacts with MTCH2. Post-translationally, TNF-alpha induces caspase-mediated cleavage into a major p15 and minor p13 and p11 products. Cleaved by CASP6 into a major p15 and minor p13 products, leading to release of cytochrome c and subsequent nonalcoholic steatohepatitis. In terms of processing, ubiquitinated by ITCH; ubiquitination results in proteasome-dependent degradation.

The protein localises to the cytoplasm. It localises to the mitochondrion membrane. The protein resides in the mitochondrion outer membrane. Functionally, induces caspases and apoptosis. Counters the protective effect of BCL2. In terms of biological role, induces caspase activation and apoptosis. Allows the release of cytochrome c. This chain is BH3-interacting domain death agonist (Bid), found in Mus musculus (Mouse).